A 228-amino-acid chain; its full sequence is Chromatin remodeling protein SHL (228 aa).

The BAH domain occupies 21–137 (KSIQEGDAVL…STTGAFDPDR (117 aa)). A PHD-type zinc finger spans residues 139-190 (TVFCKCEMPYNPDDLMVQCEECSEWFHPSCIGTTIEEAKKPDNFYCEECSPQ). The segment covering 191–203 (QQNLHNSNSTSNN) has biased composition (polar residues). Residues 191-228 (QQNLHNSNSTSNNRDAKVNGKRSLEVTKSKNKHTKRPG) are disordered. Over residues 204–218 (RDAKVNGKRSLEVTK) the composition is skewed to basic and acidic residues. A Nuclear localization signal motif is present at residues 210–217 (GKRSLEVT). Positions 219 to 228 (SKNKHTKRPG) are enriched in basic residues.

It belongs to the SHL1/EBS protein family. In terms of assembly, recognizes di- and trimethylated histone H3 at lysine 4. Interacts with HDA6. Interacts with DEK3. Expressed ubiquitously. Mostly expressed in roots, stems, leaves and flowers, and, to a lower extent, in siliques.

The protein resides in the nucleus. Its function is as follows. Chromatin remodeling factor that binds to methylated histone (e.g. H3K4me2/3) to prevent their acetylation (e.g. H3K9K14Ac), likely by recruiting histone deacetylase (HDAC) complexes, and thus regulate the transcription of target genes. Required during development and for fertility, probably by modulating developmental gene expression. Promotes development speed, but at fitness cost. Involved in the chromatin-mediated repression of floral initiation and controls genes regulating flowering. Negatively regulates the expression of the floral integrator SOC1, by preventing high levels of H3 acetylation, thus maintaining an inactive chromatin conformation. This is Chromatin remodeling protein SHL from Arabidopsis thaliana (Mouse-ear cress).